A 479-amino-acid polypeptide reads, in one-letter code: Ribosomal RNA small subunit methyltransferase F (479 aa).

Residues 125–131 (AAAPGSK), E149, D176, and D194 each bind S-adenosyl-L-methionine. C247 acts as the Nucleophile in catalysis.

The protein belongs to the class I-like SAM-binding methyltransferase superfamily. RsmB/NOP family.

It is found in the cytoplasm. It catalyses the reaction cytidine(1407) in 16S rRNA + S-adenosyl-L-methionine = 5-methylcytidine(1407) in 16S rRNA + S-adenosyl-L-homocysteine + H(+). Specifically methylates the cytosine at position 1407 (m5C1407) of 16S rRNA. This Shigella dysenteriae serotype 1 (strain Sd197) protein is Ribosomal RNA small subunit methyltransferase F.